Consider the following 235-residue polypeptide: Aspartate/glutamate leucyltransferase (235 aa).

This sequence belongs to the R-transferase family. Bpt subfamily.

It is found in the cytoplasm. It carries out the reaction N-terminal L-glutamyl-[protein] + L-leucyl-tRNA(Leu) = N-terminal L-leucyl-L-glutamyl-[protein] + tRNA(Leu) + H(+). It catalyses the reaction N-terminal L-aspartyl-[protein] + L-leucyl-tRNA(Leu) = N-terminal L-leucyl-L-aspartyl-[protein] + tRNA(Leu) + H(+). Its function is as follows. Functions in the N-end rule pathway of protein degradation where it conjugates Leu from its aminoacyl-tRNA to the N-termini of proteins containing an N-terminal aspartate or glutamate. The chain is Aspartate/glutamate leucyltransferase from Pseudomonas fluorescens (strain ATCC BAA-477 / NRRL B-23932 / Pf-5).